Reading from the N-terminus, the 270-residue chain is Fibroblast growth factor 5 (270 aa).

The N-terminal stretch at 1 to 20 (MSLSFLLLLFLSHLILSAWA) is a signal peptide. The segment at 25–86 (RLAPKGQPGP…EQSSFQWSPS (62 aa)) is disordered. Residues 41–69 (PGGASSRRSSSSTATSSSSPASSSSAASR) show a composition bias toward low complexity. A compositionally biased stretch (polar residues) spans 76-86 (LEQSSFQWSPS). N-linked (GlcNAc...) asparagine glycosylation occurs at Asn112. The tract at residues 237–257 (EKKKPPNPVKPKVPLSAPRRS) is disordered.

It belongs to the heparin-binding growth factors family. Interacts with FGFR1 and FGFR2. Affinity between fibroblast growth factors (FGFs) and their receptors is increased by heparan sulfate glycosaminoglycans that function as coreceptors.

The protein resides in the secreted. In terms of biological role, plays an important role in the regulation of cell proliferation and cell differentiation. Required for normal regulation of the hair growth cycle. Functions as an inhibitor of hair elongation by promoting progression from anagen, the growth phase of the hair follicle, into catagen the apoptosis-induced regression phase. This chain is Fibroblast growth factor 5 (FGF5), found in Bos taurus (Bovine).